Consider the following 164-residue polypeptide: Putative 4-hydroxy-4-methyl-2-oxoglutarate aldolase (164 aa).

Substrate is bound by residues 80–83 and arginine 102; that span reads GGNL. Aspartate 103 provides a ligand contact to a divalent metal cation.

Belongs to the class II aldolase/RraA-like family. Homotrimer. Requires a divalent metal cation as cofactor.

The catalysed reaction is 4-hydroxy-4-methyl-2-oxoglutarate = 2 pyruvate. It catalyses the reaction oxaloacetate + H(+) = pyruvate + CO2. In terms of biological role, catalyzes the aldol cleavage of 4-hydroxy-4-methyl-2-oxoglutarate (HMG) into 2 molecules of pyruvate. Also contains a secondary oxaloacetate (OAA) decarboxylase activity due to the common pyruvate enolate transition state formed following C-C bond cleavage in the retro-aldol and decarboxylation reactions. This chain is Putative 4-hydroxy-4-methyl-2-oxoglutarate aldolase, found in Paraburkholderia phymatum (strain DSM 17167 / CIP 108236 / LMG 21445 / STM815) (Burkholderia phymatum).